A 401-amino-acid polypeptide reads, in one-letter code: Phosphoglycerate kinase (401 aa).

Residues 24-26 (DFN), R40, 63-66 (HFGR), R122, and R155 contribute to the substrate site. Residues K206, G297, E328, and 357-360 (GGDS) contribute to the ATP site.

The protein belongs to the phosphoglycerate kinase family. Monomer.

Its subcellular location is the cytoplasm. The enzyme catalyses (2R)-3-phosphoglycerate + ATP = (2R)-3-phospho-glyceroyl phosphate + ADP. Its pathway is carbohydrate degradation; glycolysis; pyruvate from D-glyceraldehyde 3-phosphate: step 2/5. The chain is Phosphoglycerate kinase from Gloeothece citriformis (strain PCC 7424) (Cyanothece sp. (strain PCC 7424)).